Here is a 397-residue protein sequence, read N- to C-terminus: Metallophosphoesterase 1 (397 aa).

The chain crosses the membrane as a helical span at residues 27-47 (IAVVFAVLLFCEFLIYYLAIF). Residues D77, D119, N157, H250, H304, and H306 each contribute to the a divalent metal cation site. The chain crosses the membrane as a helical span at residues 357 to 377 (VVLIIYCGMVGFLVVLTLTHF). Positions 393–397 (KRKTR) match the Di-lysine motif motif.

Belongs to the metallophosphoesterase superfamily. MPPE1 family. In terms of assembly, interacts with GPI-anchor proteins (via the GPI portion). Interacts with TMED10. Mn(2+) is required as a cofactor.

The protein resides in the endoplasmic reticulum-Golgi intermediate compartment membrane. Its function is as follows. Metallophosphoesterase that catalyzes the removal of a side-chain ethanolamine-phosphate (EtNP) from the second mannose of the GPI-anchor protein intermediate. Participates in the glycan remodeling steps of GPI-anchor maturation to allow an efficient transport of GPI-anchor proteins from the endoplasmic reticulum to the Golgi. The polypeptide is Metallophosphoesterase 1 (Pongo abelii (Sumatran orangutan)).